A 30-amino-acid polypeptide reads, in one-letter code: Putative UPF0377 protein YNR075C-A (30 aa).

This sequence belongs to the UPF0377 family.

This Saccharomyces cerevisiae (strain ATCC 204508 / S288c) (Baker's yeast) protein is Putative UPF0377 protein YNR075C-A.